Consider the following 181-residue polypeptide: Large ribosomal subunit protein uL6 (181 aa).

It belongs to the universal ribosomal protein uL6 family. Part of the 50S ribosomal subunit.

This protein binds to the 23S rRNA, and is important in its secondary structure. It is located near the subunit interface in the base of the L7/L12 stalk, and near the tRNA binding site of the peptidyltransferase center. This Synechococcus sp. (strain CC9605) protein is Large ribosomal subunit protein uL6.